A 992-amino-acid chain; its full sequence is MQTRPSSEPHRSRDQVTDGDRNRDQPQKCASATLAKKPVTPPAAPPPTPSNRVVAPLTVPVIQLTPAQSDSPVKLARPATPKETAISVPDHSNKENQPARTPPPSKSCPLGAPTNYVARRTWITTERMNELRRKAQEAAKQNKIFTIRGCFNSVRNALLMRGWVEKLDVHRKVMPAGQMTYEDLTQRLPKRKAGETRRQYVQKCERNIMSRFLEHMPVDFLWTNRKEKCDYIDQAKNPGMTINKFHRAPFTSKEGLCSQLRDFHWFFEEGTAEMYFPRCYNVWSPEELGEFIENFKLTACVAFLRAMLCKYHKQGSDAVFSCSGKIPYSAIDFAYKRLVEYIDSCQHNDIDFEDPPKIWEHDWDAFLFQHQQLVNEDGRIQHDGGQRLEPMVKSCLSLVDKMKVHWPQYSLDGYQNMWIVKPANKCRGRGIILMDNLKKILGVVNLSIASKSRYVVQKYIERPLILFQTKFDIRQWFLITNTQPLVVWFYRESYLRFSSQEYSLSNHHESVHLTNYAIQKKYTNGKRDKRLPSENMWDCYSFQAYLRQIGKYNMWLERIFPGMRKAIVGCMLASQENMDRRPNTFELFGADFMICENFYPWLIEINSSPDLGATTSVTARMCPQCLEDVVKVVIDRRTDPKAELGNFELAYRQVVPPTPAYMGLNLFVKGKQVLQKANHGGGHGHYYYQQQRKERSLATSSVYRQRSAIIHPATSISRIHRAMPTFNATEYMEKYMVEPLSSSRSSLCSQLPQKSPSAAPALTATPSGATSSYILKQAGRSITQLLSATHKRNTGGSLSGEQVQSTALPPKRQRSCGPRLSSTNPVESTEKKFKILIKNYSSNGNENMQDARPEVANSATATAISERKWRSLRNIAATAGGSSNLAARSKGPPLIAPPSLPTRRLTRTKSEIDSTGMHAIGRTFGRKSNGPRLPISISVQALHRGEPIVAALKQATSELQLSQAQMMSPRTALANKLNGSTLMVPASALPVG.

Disordered regions lie at residues 1–54 and 68–113; these read MQTR…NRVV and QSDS…LGAP. Residues 7–26 show a composition bias toward basic and acidic residues; it reads SEPHRSRDQVTDGDRNRDQP. A compositionally biased stretch (pro residues) spans 39–49; sequence VTPPAAPPPTP. The TTL domain occupies 295–645; that stretch reads FKLTACVAFL…RRTDPKAELG (351 aa). ATP-binding positions include 457–460, Lys-470, and Asp-472; that span reads QKYI. 2 disordered regions span residues 746-766 and 791-828; these read SLCS…TATP and KRNT…PVES. Residues 794–807 are compositionally biased toward polar residues; the sequence is TGGSLSGEQVQSTA.

The protein resides in the cytoplasm. Its subcellular location is the cytoskeleton. In terms of biological role, polylycylase which modifies alpha- and beta-tubulin, generating side chains of glycine on the gamma-carboxyl groups of specific glutamate residues within the C-terminal tail of alpha- and beta-tubulin. Involved both in the side-chain initiation and elongation steps of the polyglycylation reaction by adding a single glycine chain to generate monoglycine side chains and by elongating monoglycine side chains to polyglycine side chains. The protein is Tubulin glycylase 3A (TTLL3A) of Drosophila melanogaster (Fruit fly).